A 620-amino-acid chain; its full sequence is Probable serine/threonine-protein kinase RTK1 (620 aa).

Disordered regions lie at residues 1-20 (MVKETPLHSSSSTSLSSLFR), 29-130 (AKIF…PVRT), 153-186 (KDAFHHPHPVRSTAHSNISTVSSAKSDTPSSNLS), 210-237 (QASTPGSVELQHNSSSGSDDTSSRKKKS), and 252-271 (HDNHHHHHHHNRGSTPTKPK). Residues 7-18 (LHSSSSTSLSSL) show a composition bias toward low complexity. Residues 56–76 (KNTDSDQEDQIKYNKPNDRRS) are compositionally biased toward basic and acidic residues. T58 carries the post-translational modification Phosphothreonine. S60 carries the phosphoserine modification. Polar residues-rich tracts occupy residues 95 to 107 (VASSTLTGISPTS), 165 to 186 (TAHSNISTVSSAKSDTPSSNLS), and 210 to 222 (QASTPGSVELQHN). S216 is modified (phosphoserine). Residues 254-263 (NHHHHHHHNR) are compositionally biased toward basic residues. A Protein kinase domain is found at 302-575 (GIPGRKLGEG…MNDVVKDDWL (274 aa)). Residues 308–316 (LGEGASGSV) and K330 contribute to the ATP site. A Glycyl lysine isopeptide (Lys-Gly) (interchain with G-Cter in ubiquitin) cross-link involves residue K334. The active-site Proton acceptor is D430.

It belongs to the protein kinase superfamily. Ser/Thr protein kinase family. In terms of assembly, interacts with ribosome biogenesis factors ARC1, CKA2 and GUS1.

It catalyses the reaction L-seryl-[protein] + ATP = O-phospho-L-seryl-[protein] + ADP + H(+). The enzyme catalyses L-threonyl-[protein] + ATP = O-phospho-L-threonyl-[protein] + ADP + H(+). Its function is as follows. Probable serine/threonine-protein kinase that may be involved in ribosome biogenesis. This chain is Probable serine/threonine-protein kinase RTK1 (RTK1), found in Saccharomyces cerevisiae (strain ATCC 204508 / S288c) (Baker's yeast).